The following is a 54-amino-acid chain: Small ribosomal subunit protein uS14 (54 aa).

Zn(2+) is bound by residues C19, C22, C37, and C40.

This sequence belongs to the universal ribosomal protein uS14 family. Zinc-binding uS14 subfamily. Part of the 30S ribosomal subunit. It depends on Zn(2+) as a cofactor.

Functionally, binds 16S rRNA, required for the assembly of 30S particles. In Aeropyrum pernix (strain ATCC 700893 / DSM 11879 / JCM 9820 / NBRC 100138 / K1), this protein is Small ribosomal subunit protein uS14.